The chain runs to 156 residues: Ribosomal RNA large subunit methyltransferase H (156 aa).

Residues leucine 72, glycine 104, and 123 to 128 contribute to the S-adenosyl-L-methionine site; that span reads FGAMVW.

It belongs to the RNA methyltransferase RlmH family. As to quaternary structure, homodimer.

It localises to the cytoplasm. It carries out the reaction pseudouridine(1915) in 23S rRNA + S-adenosyl-L-methionine = N(3)-methylpseudouridine(1915) in 23S rRNA + S-adenosyl-L-homocysteine + H(+). Specifically methylates the pseudouridine at position 1915 (m3Psi1915) in 23S rRNA. The sequence is that of Ribosomal RNA large subunit methyltransferase H from Ruegeria pomeroyi (strain ATCC 700808 / DSM 15171 / DSS-3) (Silicibacter pomeroyi).